A 102-amino-acid polypeptide reads, in one-letter code: Large ribosomal subunit protein uL24 (102 aa).

It belongs to the universal ribosomal protein uL24 family. As to quaternary structure, part of the 50S ribosomal subunit.

Functionally, one of two assembly initiator proteins, it binds directly to the 5'-end of the 23S rRNA, where it nucleates assembly of the 50S subunit. In terms of biological role, one of the proteins that surrounds the polypeptide exit tunnel on the outside of the subunit. This is Large ribosomal subunit protein uL24 from Macrococcus caseolyticus (strain JCSC5402) (Macrococcoides caseolyticum).